The following is a 511-amino-acid chain: 2-isopropylmalate synthase (511 aa).

The Pyruvate carboxyltransferase domain maps to 6–269 (IIIFDTTLRD…YTDIKCENIF (264 aa)). Mn(2+) contacts are provided by Asp15, His203, His205, and Asn239. A regulatory domain region spans residues 394-511 (ILEKLSVISG…SLKVEERKMA (118 aa)).

It belongs to the alpha-IPM synthase/homocitrate synthase family. LeuA type 1 subfamily. As to quaternary structure, homodimer. It depends on Mn(2+) as a cofactor.

The protein resides in the cytoplasm. It carries out the reaction 3-methyl-2-oxobutanoate + acetyl-CoA + H2O = (2S)-2-isopropylmalate + CoA + H(+). It functions in the pathway amino-acid biosynthesis; L-leucine biosynthesis; L-leucine from 3-methyl-2-oxobutanoate: step 1/4. Catalyzes the condensation of the acetyl group of acetyl-CoA with 3-methyl-2-oxobutanoate (2-ketoisovalerate) to form 3-carboxy-3-hydroxy-4-methylpentanoate (2-isopropylmalate). The protein is 2-isopropylmalate synthase of Campylobacter jejuni subsp. jejuni serotype O:6 (strain 81116 / NCTC 11828).